Reading from the N-terminus, the 96-residue chain is Large ribosomal subunit protein bL27 (96 aa).

The propeptide occupies 1–9 (MLRLDLQFF). The disordered stretch occupies residues 14–35 (GVGSTKNGRDSQSKRLGAKRAD).

Belongs to the bacterial ribosomal protein bL27 family. Post-translationally, the N-terminus is cleaved by ribosomal processing cysteine protease Prp.

This Bacillus cytotoxicus (strain DSM 22905 / CIP 110041 / 391-98 / NVH 391-98) protein is Large ribosomal subunit protein bL27.